The following is a 484-amino-acid chain: Putative cysteine ligase BshC (484 aa).

Residues 372–435 are a coiled coil; the sequence is RAFRDRVEGL…AARDEVLARH (64 aa).

This sequence belongs to the BshC family.

The sequence is that of Putative cysteine ligase BshC from Thermus thermophilus (strain ATCC BAA-163 / DSM 7039 / HB27).